The following is an 85-amino-acid chain: Small ribosomal subunit protein bS18c (85 aa).

Belongs to the bacterial ribosomal protein bS18 family. Part of the 30S ribosomal subunit.

The protein localises to the plastid. The protein resides in the chloroplast. The sequence is that of Small ribosomal subunit protein bS18c from Zygnema circumcarinatum (Green alga).